Reading from the N-terminus, the 94-residue chain is Probable Fe(2+)-trafficking protein (94 aa).

The protein belongs to the Fe(2+)-trafficking protein family.

Could be a mediator in iron transactions between iron acquisition and iron-requiring processes, such as synthesis and/or repair of Fe-S clusters in biosynthetic enzymes. The polypeptide is Probable Fe(2+)-trafficking protein (Alcanivorax borkumensis (strain ATCC 700651 / DSM 11573 / NCIMB 13689 / SK2)).